The sequence spans 474 residues: Methylenetetrahydrofolate--tRNA-(uracil-5-)-methyltransferase TrmFO (474 aa).

FAD is bound at residue 9 to 14; that stretch reads GGGLAG.

The protein belongs to the MnmG family. TrmFO subfamily. Requires FAD as cofactor.

Its subcellular location is the cytoplasm. It catalyses the reaction uridine(54) in tRNA + (6R)-5,10-methylene-5,6,7,8-tetrahydrofolate + NADH + H(+) = 5-methyluridine(54) in tRNA + (6S)-5,6,7,8-tetrahydrofolate + NAD(+). The enzyme catalyses uridine(54) in tRNA + (6R)-5,10-methylene-5,6,7,8-tetrahydrofolate + NADPH + H(+) = 5-methyluridine(54) in tRNA + (6S)-5,6,7,8-tetrahydrofolate + NADP(+). In terms of biological role, catalyzes the folate-dependent formation of 5-methyl-uridine at position 54 (M-5-U54) in all tRNAs. The chain is Methylenetetrahydrofolate--tRNA-(uracil-5-)-methyltransferase TrmFO from Methylorubrum extorquens (strain PA1) (Methylobacterium extorquens).